A 630-amino-acid polypeptide reads, in one-letter code: MQGGNSGVRKREEEGDGAGAVAAPPAIDFPAEGPDPEYDESDVPAEIQVLKEPLQQPTFPFAVANQLLLVSLLEHLSHVHEPNPLRSRQVFKLLCQTFIKMGLLSSFTCSDEFSSLRLHHNRAITHLMRSAKERVRQDPCEDISRIQKIRSREVALEAQTSRYLNEFEELAILGKGGYGRVYKVRNKLDGQYYAIKKILIKGATKTVCMKVLREVKVLAGLQHPNIVGYHTAWIEHVHVIQPRADRAAIELPSLEVLSDQEEDREQCGVKNDESSSSSIIFAEPTPEKEKRFGESDTENQNNKSVKYTTNLVIRESGELESTLELQENGLAGLSASSIVEQQLPLRRNSHLEESFTSTEESSEENVNFLGQTEAQYHLMLHIQMQLCELSLWDWIVERNKRGREYVDESACPYVMANVATKIFQELVEGVFYIHNMGIVHRDLKPRNIFLHGPDQQVKIGDFGLACTDILQKNTDWTNRNGKRTPTHTSRVGTCLYASPEQLEGSEYDAKSDMYSLGVVLLELFQPFGTEMERAEVLTGLRTGQLPESLRKRCPVQAKYIQHLTRRNSSQRPSAIQLLQSELFQNSGNVNLTLQMKIIEQEKEIAELKKQLNLLSQDKGVRDDGKDGGVG.

The disordered stretch occupies residues 1-40 (MQGGNSGVRKREEEGDGAGAVAAPPAIDFPAEGPDPEYDE). Positions 85–104 (LRSRQVFKLLCQTFIKMGLL) match the SIFI-degron motif. Residues 167–583 (FEELAILGKG…AIQLLQSELF (417 aa)) enclose the Protein kinase domain. Residues 173–181 (LGKGGYGRV) and lysine 196 each bind ATP. Residues 259–301 (DQEEDREQCGVKNDESSSSSIIFAEPTPEKEKRFGESDTENQN) are disordered. The residue at position 285 (threonine 285) is a Phosphothreonine. The span at 285-294 (TPEKEKRFGE) shows a compositional bias: basic and acidic residues. The HRM 1 repeat unit spans residues 410-415 (ACPYVM). Catalysis depends on aspartate 442, which acts as the Proton acceptor. Residues threonine 486 and threonine 488 each carry the phosphothreonine; by autocatalysis modification. The residue at position 493 (threonine 493) is a Phosphothreonine. The stretch at 552 to 557 (RCPVQA) is one HRM 2 repeat.

This sequence belongs to the protein kinase superfamily. Ser/Thr protein kinase family. GCN2 subfamily. In terms of assembly, synthesized in an inactive form that binds to the N-terminal domain of CDC37. Has to be associated with a multiprotein complex containing Hsp90, CDC37 and PPP5C for maturation and activation by autophosphorylation. The phosphatase PPP5C modulates this activation. Homodimer; homodimerizes in presence of heme, forming a disulfide-linked inactive homodimer. Interacts with DELE1; binds both to full-length DELE1 and processed form of DELE1 (S-DELE1) in response to stress, leading to activate its protein kinase activity and trigger the integrated stress response (ISR). In terms of processing, activated by autophosphorylation; phosphorylated predominantly on serine and threonine residues, but also on tyrosine residues. Autophosphorylation at Thr-488 is required for kinase activation. The active autophosphorylated form apparently is largely refractory to cellular heme fluctuations. Ubiquitinated and degraded by the SIFI complex once the mitochondrial stress has been resolved, thereby providing stress response silencing. Within the SIFI complex, UBR4 initiates ubiquitin chain that are further elongated or branched by KCMF1.

It catalyses the reaction L-seryl-[protein] + ATP = O-phospho-L-seryl-[protein] + ADP + H(+). The catalysed reaction is L-threonyl-[protein] + ATP = O-phospho-L-threonyl-[protein] + ADP + H(+). With respect to regulation, in normal conditions, the protein kinase activity is inhibited; inhibition is relieved by various stress conditions. Inhibited by heme: in presence of heme, forms a disulfide-linked inactive homodimer. Heme depletion relieves inhibition and stimulates kinase activity by autophosphorylation. Inhibited by the heme metabolites biliverdin and bilirubin. Induced by oxidative stress generated by arsenite treatment. Binding of nitric oxide (NO) to the heme iron in the N-terminal heme-binding domain activates the kinase activity, while binding of carbon monoxide (CO) suppresses kinase activity. Protein kinase activity is also activated upon binding to DELE1 in response to various stress, triggering the integrated stress response (ISR): activated by full-length DELE1 in response to iron deficiency, while it is activated by the processed form of DELE1 (S-DELE1) in response to mitochondrial stress. Metabolic-stress sensing protein kinase that phosphorylates the alpha subunit of eukaryotic translation initiation factor 2 (EIF2S1/eIF-2-alpha) in response to various stress conditions. Key activator of the integrated stress response (ISR) required for adaptation to various stress, such as heme deficiency, oxidative stress, osmotic shock, mitochondrial dysfunction and heat shock. EIF2S1/eIF-2-alpha phosphorylation in response to stress converts EIF2S1/eIF-2-alpha in a global protein synthesis inhibitor, leading to a global attenuation of cap-dependent translation, while concomitantly initiating the preferential translation of ISR-specific mRNAs, such as the transcriptional activator ATF4, and hence allowing ATF4-mediated reprogramming. Acts as a key sensor of heme-deficiency: in normal conditions, binds hemin via a cysteine thiolate and histidine nitrogenous coordination, leading to inhibit the protein kinase activity. This binding occurs with moderate affinity, allowing it to sense the heme concentration within the cell: heme depletion relieves inhibition and stimulates kinase activity, activating the ISR. Thanks to this unique heme-sensing capacity, plays a crucial role to shut off protein synthesis during acute heme-deficient conditions. In red blood cells (RBCs), controls hemoglobin synthesis ensuring a coordinated regulation of the synthesis of its heme and globin moieties. It thereby plays an essential protective role for RBC survival in anemias of iron deficiency. Iron deficiency also triggers activation by full-length DELE1. Also activates the ISR in response to mitochondrial dysfunction: HRI/EIF2AK1 protein kinase activity is activated upon binding to the processed form of DELE1 (S-DELE1), thereby promoting the ATF4-mediated reprogramming. Also acts as an activator of mitophagy in response to mitochondrial damage: catalyzes phosphorylation of eIF-2-alpha (EIF2S1) following activation by S-DELE1, thereby promoting mitochondrial localization of EIF2S1, triggering PRKN-independent mitophagy. The chain is Eukaryotic translation initiation factor 2-alpha kinase 1 from Homo sapiens (Human).